Reading from the N-terminus, the 361-residue chain is Mitochondrial import receptor subunit TOM40 homolog (361 aa).

Residues 1 to 10 show a composition bias toward low complexity; it reads MGNVLAASSP. A disordered region spans residues 1–71; sequence MGNVLAASSP…AASAGGTADD (71 aa). Residues 11–36 show a composition bias toward pro residues; it reads PAGPPPPPAPPLVGLPPPPPSPPGFT. A compositionally biased stretch (gly residues) spans 40-52; that stretch reads LGGGLGAGAGTGR. The segment covering 59–71 has biased composition (low complexity); that stretch reads GTAAASAGGTADD.

The protein belongs to the Tom40 family. In terms of assembly, forms part of the preprotein translocase complex of the outer mitochondrial membrane (TOM complex) which consists of at least 7 different proteins (TOMM5, TOMM6, TOMM7, TOMM20, TOMM22, TOMM40 and TOMM70). Interacts with mitochondrial targeting sequences. Interacts with TIMM29; linking the TIM22 complex to the TOM complex. Forms a complex with BCAP31 (via C-terminus) which mediates the translocation of components of the mitochondrial membrane respiratory chain NADH dehydrogenase (Complex I) from the cytosol to the mitochondria. Interacts (via N-terminus) with CYP1A1 (via mitochondrial targeting signal); this interaction is required for CYP1A1 translocation across the mitochondrial outer membrane.

It localises to the mitochondrion outer membrane. In terms of biological role, channel-forming protein essential for import of protein precursors into mitochondria. Plays a role in the assembly of the mitochondrial membrane respiratory chain NADH dehydrogenase (Complex I) by forming a complex with BCAP31 and mediating the translocation of Complex I components from the cytosol to the mitochondria. The protein is Mitochondrial import receptor subunit TOM40 homolog of Bos taurus (Bovine).